The following is a 516-amino-acid chain: Lysine--tRNA ligase (516 aa).

Residues 1 to 23 (MTEPNRAQAAPASPTAELPAADE) are disordered. The Mg(2+) site is built by Glu-426 and Glu-433.

This sequence belongs to the class-II aminoacyl-tRNA synthetase family. Homodimer. It depends on Mg(2+) as a cofactor.

It is found in the cytoplasm. It catalyses the reaction tRNA(Lys) + L-lysine + ATP = L-lysyl-tRNA(Lys) + AMP + diphosphate. This is Lysine--tRNA ligase from Cupriavidus pinatubonensis (strain JMP 134 / LMG 1197) (Cupriavidus necator (strain JMP 134)).